The following is a 115-amino-acid chain: Large ribosomal subunit protein P2 (115 aa).

Met1 is modified (N-acetylmethionine). Phosphoserine is present on residues Ser17 and Ser19. The residue at position 21 (Lys21) is an N6-acetyllysine; alternate. N6-succinyllysine; alternate is present on Lys21. Over residues 69–90 (GAXAVAAAPGSXAPAAGSAPAA) the composition is skewed to low complexity. The segment at 69–115 (GAXAVAAAPGSXAPAAGSAPAAAEEKKEEKKEESEESDDDMGFGLFD) is disordered. A phosphoserine mark is found at Ser79 and Ser86. The span at 91–101 (AEEKKEEKKEE) shows a compositional bias: basic and acidic residues. Residues Ser102 and Ser105 each carry the phosphoserine modification.

It belongs to the eukaryotic ribosomal protein P1/P2 family. As to quaternary structure, heterodimer with RPLP1 at the lateral ribosomal stalk of the large ribosomal subunit.

Functionally, plays an important role in the elongation step of protein synthesis. The sequence is that of Large ribosomal subunit protein P2 (RPLP2) from Sus scrofa (Pig).